The primary structure comprises 238 residues: dITP/XTP pyrophosphatase (238 aa).

Substrate is bound at residue 7–12 (SANQHK). Asp-89 acts as the Proton acceptor in catalysis. A Mg(2+)-binding site is contributed by Asp-89. Substrate is bound by residues Ser-90, 191 to 194 (FGYD), Lys-217, and 222 to 223 (HR).

The protein belongs to the HAM1 NTPase family. In terms of assembly, homodimer. The cofactor is Mg(2+).

The enzyme catalyses XTP + H2O = XMP + diphosphate + H(+). It carries out the reaction dITP + H2O = dIMP + diphosphate + H(+). It catalyses the reaction ITP + H2O = IMP + diphosphate + H(+). In terms of biological role, pyrophosphatase that catalyzes the hydrolysis of nucleoside triphosphates to their monophosphate derivatives, with a high preference for the non-canonical purine nucleotides XTP (xanthosine triphosphate), dITP (deoxyinosine triphosphate) and ITP. Seems to function as a house-cleaning enzyme that removes non-canonical purine nucleotides from the nucleotide pool, thus preventing their incorporation into DNA/RNA and avoiding chromosomal lesions. This Helicobacter hepaticus (strain ATCC 51449 / 3B1) protein is dITP/XTP pyrophosphatase.